Here is a 241-residue protein sequence, read N- to C-terminus: Uridylate kinase (241 aa).

Residue 14 to 17 (KLSG) participates in ATP binding. The interval 22 to 27 (GNQGFG) is involved in allosteric activation by GTP. Gly-56 provides a ligand contact to UMP. Gly-57 and Arg-61 together coordinate ATP. UMP contacts are provided by residues Asp-76 and 137-144 (TGNPYFTT). 3 residues coordinate ATP: Thr-164, Tyr-170, and Asp-173.

It belongs to the UMP kinase family. As to quaternary structure, homohexamer.

The protein resides in the cytoplasm. The catalysed reaction is UMP + ATP = UDP + ADP. It functions in the pathway pyrimidine metabolism; CTP biosynthesis via de novo pathway; UDP from UMP (UMPK route): step 1/1. Its activity is regulated as follows. Allosterically activated by GTP. Inhibited by UTP. Catalyzes the reversible phosphorylation of UMP to UDP. The protein is Uridylate kinase of Syntrophotalea carbinolica (strain DSM 2380 / NBRC 103641 / GraBd1) (Pelobacter carbinolicus).